Consider the following 452-residue polypeptide: Glycine receptor subunit alpha-2 (452 aa).

An N-terminal signal peptide occupies residues 1–27 (MNRQLVNILTALFAFFLETNHFRTAFC). Over 28–256 (KDHDSRSGKQ…KFHLERQMGY (229 aa)) the chain is Extracellular. An N-linked (GlcNAc...) asparagine glycan is attached at asparagine 72. Residue arginine 99 coordinates glycine. Arginine 99 is a binding site for strychnine. Asparagine 103 carries an N-linked (GlcNAc...) asparagine glycan. Serine 163 contributes to the glycine binding site. Cysteine 172 and cysteine 186 are joined by a disulfide. Residues glutamate 226 and glutamate 228 each coordinate Zn(2+). Cysteines 232 and 243 form a disulfide. Residue threonine 238 participates in glycine binding. Histidine 249 contributes to the Zn(2+) binding site. Residues 257-278 (YLIQMYIPSLLIVILSWVSFWI) form a helical membrane-spanning segment. The Cytoplasmic portion of the chain corresponds to 279–283 (NMDAA). Residues 284–304 (PARVALGITTVLTMTTQSSGS) form a helical membrane-spanning segment. Topologically, residues 305 to 315 (RASLPKVSYVK) are extracellular. The chain crosses the membrane as a helical span at residues 316–336 (AIDIWMAVCLLFVFAALLEYA). Residues 337–420 (AVNFVSRQHK…FVDRAKRIDT (84 aa)) are Cytoplasmic-facing. Residues 421 to 441 (ISRAAFPLAFLIFNIFYWITY) traverse the membrane as a helical segment. The Extracellular portion of the chain corresponds to 442–452 (KIIRHEDVHKK).

Belongs to the ligand-gated ion channel (TC 1.A.9) family. Glycine receptor (TC 1.A.9.3) subfamily. GLRA2 sub-subfamily. As to quaternary structure, interacts with GLRB. Heteropentamer composed of GLRA2 and GLRB. Functional GLRB-GLRA2 heteropentamers contain four GLRA2 subunits and one GLRB subunit, although alternative subunit composition cannot be excluded. Homopentamer (in vitro). Both homopentamers and heteropentamers form functional ion channels, but their characteristics are subtly different.

It is found in the postsynaptic cell membrane. The protein resides in the synapse. Its subcellular location is the cell membrane. It localises to the cell projection. It carries out the reaction chloride(in) = chloride(out). Channel opening is triggered by extracellular glycine. Channel opening is also triggered by taurine and beta-alanine. Inhibited by strychnine. Inhibited by picrotoxin. Channel activity is potentiated by 10-100 uM Zn(2+). Channel activity is marginally increased by 50 mM ethanol; it is strongly increased by a combination of 0.5 uM Zn(2+) and 50 mM ethanol. Channel activity is inhibited by 100-1000 uM Zn(2+). Functionally, subunit of heteromeric glycine-gated chloride channels. Plays a role in synaptic plasticity. Contributes to the generation of inhibitory postsynaptic currents, and is involved in the down-regulation of neuronal excitability. Plays a role in cellular responses to ethanol. The chain is Glycine receptor subunit alpha-2 from Homo sapiens (Human).